Consider the following 2034-residue polypeptide: Pecanex-like protein 3 (2034 aa).

Transmembrane regions (helical) follow at residues 33–53 (CFHL…YMVL) and 54–74 (PPSL…FATI). The tract at residues 96–118 (STMGELEEEPAQGDSNPPRDPGV) is disordered. Ser-127 bears the Phosphoserine mark. Residue Thr-129 is modified to Phosphothreonine. 3 disordered regions span residues 193-242 (IGDL…PLLK), 260-517 (DRAL…LRPP), and 540-625 (VLPA…SHSR). Positions 294–303 (KAGSSDSCFS) are enriched in polar residues. Over residues 305–319 (TDRETLSSFKSEKTN) the composition is skewed to basic and acidic residues. An N-linked (GlcNAc...) asparagine glycan is attached at Asn-319. Thr-370 is subject to Phosphothreonine. Residues 391 to 409 (PSKRQPPLRRHSPPGRAPR) are compositionally biased toward basic residues. Phosphoserine occurs at positions 392 and 431. Polar residues predominate over residues 427–436 (GSELSPASSL). Low complexity predominate over residues 444-460 (TDSSSSTSCYSPESSRG). Over residues 488–497 (TQRTPSTASA) the composition is skewed to polar residues. A Phosphoserine modification is found at Ser-505. Transmembrane regions (helical) follow at residues 790–812 (VLEN…LLLL), 819–836 (IWVF…YSLL), 852–872 (WVIA…IWLL), 880–900 (PFPP…FFCA), 903–923 (VATV…LPQV), 946–968 (SPLT…YGFC), and 980–1000 (HVPV…YHLS). Ser-1025 carries the post-translational modification Phosphoserine. 4 consecutive transmembrane segments (helical) span residues 1053-1073 (LVMC…TVFI), 1078-1098 (VLGF…HYLL), 1244-1264 (FVLT…HAFA), and 1280-1300 (LLSG…VFIM). Ser-1697 is modified (phosphoserine). The N-linked (GlcNAc...) asparagine glycan is linked to Asn-1770. The interval 1844–2034 (GGLTSLSNNP…AAQPLLEHQY (191 aa)) is disordered. The segment covering 1890 to 1910 (RPPPLLQWPPPRLPGPPPASP) has biased composition (pro residues). At Ser-1909 the chain carries Phosphoserine. Positions 1925 to 1939 (GLLSSEGPSGKWSLG) are enriched in low complexity. Position 1955 is a phosphoserine (Ser-1955). Low complexity predominate over residues 1969 to 1978 (LSLSLSLSLS).

Belongs to the pecanex family.

Its subcellular location is the membrane. This Homo sapiens (Human) protein is Pecanex-like protein 3.